The sequence spans 548 residues: Chaperonin GroEL (548 aa).

ATP is bound by residues 30 to 33 (TLGP), lysine 51, 87 to 91 (DGTTT), glycine 415, and aspartate 495.

This sequence belongs to the chaperonin (HSP60) family. Forms a cylinder of 14 subunits composed of two heptameric rings stacked back-to-back. Interacts with the co-chaperonin GroES.

It is found in the cytoplasm. The catalysed reaction is ATP + H2O + a folded polypeptide = ADP + phosphate + an unfolded polypeptide.. Its function is as follows. Together with its co-chaperonin GroES, plays an essential role in assisting protein folding. The GroEL-GroES system forms a nano-cage that allows encapsulation of the non-native substrate proteins and provides a physical environment optimized to promote and accelerate protein folding. This chain is Chaperonin GroEL, found in Yersinia pseudotuberculosis serotype O:1b (strain IP 31758).